A 381-amino-acid polypeptide reads, in one-letter code: DNA replication and repair protein RecF (381 aa).

30–37 (GENAQGKT) is a binding site for ATP.

The protein belongs to the RecF family.

It is found in the cytoplasm. The RecF protein is involved in DNA metabolism; it is required for DNA replication and normal SOS inducibility. RecF binds preferentially to single-stranded, linear DNA. It also seems to bind ATP. This is DNA replication and repair protein RecF from Lactobacillus delbrueckii subsp. bulgaricus (strain ATCC BAA-365 / Lb-18).